A 423-amino-acid chain; its full sequence is Isovaleryl-CoA dehydrogenase, mitochondrial (423 aa).

The transit peptide at 1-29 directs the protein to the mitochondrion; that stretch reads MATATRLLGWRVASWRMRPPPAGFVSQRA. N6-acetyllysine; alternate occurs at positions 55, 64, and 75. N6-succinyllysine; alternate occurs at positions 55, 64, and 75. Residues 162–171 and 195–197 contribute to the FAD site; these read LAMSEPNAGS and WIT. Residue serine 171 coordinates substrate. 219–220 lines the substrate pocket; the sequence is SR. Lysine 238 carries the post-translational modification N6-acetyllysine. At lysine 259 the chain carries N6-acetyllysine; alternate. At lysine 259 the chain carries N6-succinyllysine; alternate. Substrate is bound by residues tyrosine 274 and 281–284; that span reads DLER. Residue glutamate 283 is the Proton acceptor of the active site. Arginine 309 contacts FAD. The residue at position 315 (lysine 315) is an N6-succinyllysine. FAD-binding positions include glutamine 320 and 377 to 381; that span reads QCFGG. Residue 404–405 participates in substrate binding; the sequence is AG. 406 to 408 contacts FAD; that stretch reads TSE.

It belongs to the acyl-CoA dehydrogenase family. Homotetramer. It depends on FAD as a cofactor.

The protein resides in the mitochondrion matrix. It carries out the reaction 3-methylbutanoyl-CoA + oxidized [electron-transfer flavoprotein] + H(+) = 3-methylbut-2-enoyl-CoA + reduced [electron-transfer flavoprotein]. The catalysed reaction is pentanoyl-CoA + oxidized [electron-transfer flavoprotein] + H(+) = (2E)-pentenoyl-CoA + reduced [electron-transfer flavoprotein]. The enzyme catalyses hexanoyl-CoA + oxidized [electron-transfer flavoprotein] + H(+) = (2E)-hexenoyl-CoA + reduced [electron-transfer flavoprotein]. It catalyses the reaction butanoyl-CoA + oxidized [electron-transfer flavoprotein] + H(+) = (2E)-butenoyl-CoA + reduced [electron-transfer flavoprotein]. The protein operates within amino-acid degradation; L-leucine degradation; (S)-3-hydroxy-3-methylglutaryl-CoA from 3-isovaleryl-CoA: step 1/3. In terms of biological role, catalyzes the conversion of isovaleryl-CoA/3-methylbutanoyl-CoA to 3-methylbut-2-enoyl-CoA as an intermediate step in the leucine (Leu) catabolic pathway. To a lesser extent, is also able to catalyze the oxidation of other saturated short-chain acyl-CoA thioesters as pentanoyl-CoA, hexenoyl-CoA and butenoyl-CoA. In Pongo abelii (Sumatran orangutan), this protein is Isovaleryl-CoA dehydrogenase, mitochondrial (IVD).